Consider the following 498-residue polypeptide: MASQGTKRSYEQMETDGERQNATEIRASVGKMIGGIGRFYIQMCTELKLNDYEGRLIQNSLTIERMVLSAFDERRNKYLEEHPSAGKDPKKTGGPIYKRVDGKWMRKLVLYDKEEIRRIWRQANNGDDATAGLTHMMIWHSNLNDTTYQRTRALVRTGMDPRMCSLMQGSTLPRRSGAAGAAVKGVGTMVLELIRMIKRGINDRNFWRGENGRKTRIAYERMCNILKGKFQTAAQRAMMDQVRESRNPGNAEIEDLTFLARSALILRGSVAHKSCLPACVYGPAVASGYDFEKEGYSLVGIDPFKLLQTSQVYSLIRSNENPAHKSQLVWMACNSAAFEDLRVSSFIRGTKVIPRGKLSTRGVQIASNENMDTMVSSTLELRSRYWAIRTRSGGNTNQQRASAGQISIQPTFSVQRNLPFDKTTIMAAFTGNAEGRTSDMRAEIIKMMESARPEEVSFQGRGVFELSDERAANPIVPSFDMSNEGSYFFGDNAEEYDN.

A Unconventional nuclear localization signal motif is present at residues 1–18 (MASQGTKRSYEQMETDGE). The tract at residues 1–21 (MASQGTKRSYEQMETDGERQN) is disordered. Basic and acidic residues predominate over residues 8 to 21 (RSYEQMETDGERQN). The short motif at 198 to 216 (KRGINDRNFWRGENGRKTR) is the Bipartite nuclear localization signal element.

This sequence belongs to the influenza viruses nucleoprotein family. Homomultimerizes to form the nucleocapsid. May bind host exportin-1/XPO1. Binds to viral genomic RNA. Protein-RNA contacts are mediated by a combination of electrostatic interactions between positively charged residues and the phosphate backbone and planar interactions between aromatic side chains and bases. Post-translationally, late in virus-infected cells, may be cleaved from a 56-kDa protein to a 53-kDa protein by a cellular caspase. This cleavage might be a marker for the onset of apoptosis in infected cells or have a specific function in virus host interaction.

The protein resides in the virion. Its subcellular location is the host nucleus. Encapsidates the negative strand viral RNA, protecting it from nucleases. The encapsidated genomic RNA is termed the ribonucleoprotein (RNP) and serves as template for transcription and replication. The RNP needs to be localized in the host nucleus to start an infectious cycle, but is too large to diffuse through the nuclear pore complex. NP comprises at least 2 nuclear localization signals that are responsible for the active RNP import into the nucleus through cellular importin alpha/beta pathway. Later in the infection, nclear export of RNPs are mediated through viral proteins NEP interacting with M1 which binds nucleoproteins. It is possible that nucleoprotein binds directly host exportin-1/XPO1 and plays an active role in RNPs nuclear export. M1 interaction with RNP seems to hide nucleoprotein's nuclear localization signals. Soon after a virion infects a new cell, M1 dissociates from the RNP under acidification of the virion driven by M2 protein. Dissociation of M1 from RNP unmasks nucleoprotein's nuclear localization signals, targeting the RNP to the nucleus. In Aves (Human), this protein is Nucleoprotein.